A 157-amino-acid chain; its full sequence is Endoribonuclease YbeY (157 aa).

The Zn(2+) site is built by His-114, His-118, and His-124.

The protein belongs to the endoribonuclease YbeY family. The cofactor is Zn(2+).

The protein resides in the cytoplasm. Functionally, single strand-specific metallo-endoribonuclease involved in late-stage 70S ribosome quality control and in maturation of the 3' terminus of the 16S rRNA. The polypeptide is Endoribonuclease YbeY (Salmonella dublin (strain CT_02021853)).